The primary structure comprises 1770 residues: MFNRSNTAGGSQAMKEGLGINKLSPISSNSNPSSLTSSNYEKYLQLATEKNPCMILELELDGKVRYGSPQWNTITGVADDSGSSPTYIADLILGSDQDKGVFQKATDMLLMNDDTSCTITFKIKAADYEGSAGCDDESTITTLEARGILIRDGHTQLPSHTMWIVKPRTNDWSDFYANEDAQDDMVIQLSDNCDDIDIQLPEEFAKTLGFGAKIFVQYLKRIRLEMIIDEFNLPLPKMELCRVCENFVPVWWLETHSQSCVCEHRTESLIQLLHDNLLEQQAILANFTKDSEYKGSQIQVRSNNFLNQVLDSLRELCQDAIDINPSEMVPDLYHSLSTFPQDNGNNNNNNNNNNNNNNALLDQFPIQKDTVSLNSYFQFSPRTNHNIQNVTSWQSRFFLNDDQDPGLALLIHDTLDLARKKVDAVLRLDNAMTYSLKIKNEVNNYVVQLIREQIEINKHAILTHPMNLRSSSIFHSPLPQIHSQQPEAENLIYSSSTPLQVQHDQCASFEAPSKSHLEPIPFPVSSIEETPTANDIRHPSPLPRSCSNTVMKLPTPRRKLDSNGLFSDAYLNADIIPNPSIESTISIDRDNNTNSRGSSMKQYGIGEATDSRTSNSERPSSSSSRLGIRSRSITPRQKIEYSHVDNDDRTNEMLSRDKDSLQPQPSVDTTITSSTQATTTGTKTNSNNSTNSVLPKLMTSISLTPRRGSPSFGNLASHSMQQTNSFKLIHDKSPISSPFTFSKDFLTPEQHPSNIARTDSINNAMLTSPNMPLSPLLLATNQTVKSPTPSIKDYDILKPISKGAYGSVYLARKKLTGDYFAIKVLRKSDMIAKNQVTNVKSERAIMMVQSDKPYVARLFASFQNKDNLFLVMEYLPGGDLATLIKMMGYLPDQWAKQYLTEIVVGVNDMHQNGIIHHDLKPENLLIDNAGHVKLTDFGLSRAGLIRRHKFVPHKSSLSISSTLPIDNPANNFTMNNNNSNHSQLSTPDSFTSDHKQYNRSKKSSLGQQYEHSEYSSTSNSHSMTPTPSTNTVVYPSYYRGKDRSHGSSNIDLPASLRRSESQLSFSLLDISRSSTPPLANPTNSNANNIMRRKSLTENKSFSNDLLSSDAIAATNTNINSNNNISLSPAPSDLALFYPDDSKQNKKFFGTPDYLAPETIEGKGEDNKQCDWWSVGCIFFELLLGYPPFHAETPDAVFKKILSGVIQWPEFKNEEEEREFLTPEAKDLIEKLLVVDPAKRLGAKGIQEIKDHPYFKNVDWDHVYDEEASFVPTIDNPEDTDYFDLRGAELQDFGDDIENDNANILFGKHGINTDVSELSAANLSPPLNHKNILSRKLSMSNTTNRSSNNSNSSVHDFGAHTPVNKLSIASVLESVPQETGYITPNGTGTTTTSAKNSPNLKNLSLAIPPHMRDRRSSKLNDSQTEFGSFNFRNLSALDKANKDAINRLKSEHFSEQPGVHRRTSSASLMGSSSDGSVSTPGSNASNTTSGGKLKIHKPTISGSPSTFGTFPKTFLRSDSFSTRSYSPERSISIDSSTLSRKGSIIGDNQQTTANSSDSPTMTKFKSPLSPANTTTVSSYFSRQRVLSKSFSQRTNSSDLSAEESDRLQAISRVNSLRNRRRSGRKSSSTSEIGYHMDVLVCEPIPIHRYRVTKDLENLGCTVVSVGAGDELVSRATSGVSFDLIMTALKLPKLGAIDIVQLLKQTNGANSTTPIVAITNYFQEAATSRVFDDVLEKPVKLDELKKLVAKYALKKSQEDEEHTILSDSDETH.

Positions 334–358 are disordered; sequence HSLSTFPQDNGNNNNNNNNNNNNNN. Low complexity predominate over residues 343 to 358; it reads NGNNNNNNNNNNNNNN. Ser380 and Ser476 each carry phosphoserine. 2 disordered regions span residues 530–563 and 583–694; these read TPTANDIRHPSPLPRSCSNTVMKLPTPRRKLDSN and STIS…NSVL. Positions 583-601 are enriched in polar residues; the sequence is STISIDRDNNTNSRGSSMK. Residues 611–632 are compositionally biased toward low complexity; that stretch reads SRTSNSERPSSSSSRLGIRSRS. Over residues 637–660 the composition is skewed to basic and acidic residues; sequence QKIEYSHVDNDDRTNEMLSRDKDS. The span at 669-692 shows a compositional bias: low complexity; sequence TTITSSTQATTTGTKTNSNNSTNS. Thr704 carries the phosphothreonine modification. Phosphoserine occurs at positions 709, 733, 736, and 737. At Thr747 the chain carries Phosphothreonine. A Protein kinase domain is found at 794 to 1254; the sequence is YDILKPISKG…IQEIKDHPYF (461 aa). Residues 800–808 and Lys823 each bind ATP; that span reads ISKGAYGSV. Catalysis depends on Asp918, which acts as the Proton acceptor. Low complexity predominate over residues 970-980; the sequence is NNFTMNNNNSN. The interval 970 to 1032 is disordered; the sequence is NNFTMNNNNS…MTPTPSTNTV (63 aa). Over residues 981-990 the composition is skewed to polar residues; sequence HSQLSTPDSF. Residues 1014–1031 are compositionally biased toward low complexity; sequence YSSTSNSHSMTPTPSTNT. 3 positions are modified to phosphoserine: Ser1044, Ser1048, and Ser1064. Phosphothreonine; by PHO85 is present on Thr1075. In terms of domain architecture, AGC-kinase C-terminal spans 1255–1320; it reads KNVDWDHVYD…NTDVSELSAA (66 aa). Over residues 1378–1391 the composition is skewed to low complexity; the sequence is TGYITPNGTGTTTT. The segment at 1378–1403 is disordered; it reads TGYITPNGTGTTTTSAKNSPNLKNLS. The span at 1392–1401 shows a compositional bias: polar residues; sequence SAKNSPNLKN. Ser1421 is subject to Phosphoserine. 2 disordered regions span residues 1448-1507 and 1519-1572; these read KSEH…STFG and FSTR…PANT. The span at 1463–1481 shows a compositional bias: low complexity; it reads SSASLMGSSSDGSVSTPGS. 4 positions are modified to phosphoserine: Ser1531, Ser1538, Ser1542, and Ser1565. The 115-residue stretch at 1636–1750 folds into the Response regulatory domain; that stretch reads DVLVCEPIPI…ELKKLVAKYA (115 aa). Ser1764 bears the Phosphoserine mark.

This sequence belongs to the protein kinase superfamily. Ser/Thr protein kinase family. In terms of assembly, interacts with the cyclin-dependent kinase (CDK) PHO85 and IGO1. Post-translationally, autophosphorylated. Phosphorylation by PKA strongly inhibits kinase activity. Phosphorylation by cyclin-CDK PHO80-PHO85 under favorable growth condition causes inactivation of RIM15 by promoting its export to the cytoplasm.

Its subcellular location is the cytoplasm. The protein resides in the nucleus. It catalyses the reaction L-seryl-[protein] + ATP = O-phospho-L-seryl-[protein] + ADP + H(+). The enzyme catalyses L-threonyl-[protein] + ATP = O-phospho-L-threonyl-[protein] + ADP + H(+). With respect to regulation, kinase activity is inhibited by phosphorylation by cAMP-dependent protein kinase (PKA). Protein kinase that positively regulates proper entry into stationary phase of cells under nutrient starvation conditions. Involved in glycogen and trehalose accumulation, derepression of stress-induced genes, induction of thermotolerance and starvation resistance, and proper G1 cell cycle arrest. Also involved in the activation of a meiotic genes activation pathway. Phosphorylates IGO1 and IGO2, both involved in the TORC1 control of gene expression and chronological life span. The polypeptide is Serine/threonine-protein kinase RIM15 (RIM15) (Saccharomyces cerevisiae (strain ATCC 204508 / S288c) (Baker's yeast)).